The following is a 634-amino-acid chain: Chaperone protein HtpG (634 aa).

The interval 1–342 (MTVETDKQTL…SSDLSLNVSR (342 aa)) is a; substrate-binding. A b region spans residues 343-559 (EILQSGPVVD…QGDLGLQMRQ (217 aa)). The c stretch occupies residues 560–634 (LLEASGQAVP…LNKLLLELSA (75 aa)).

It belongs to the heat shock protein 90 family. As to quaternary structure, homodimer.

The protein localises to the cytoplasm. Functionally, molecular chaperone. Has ATPase activity. The chain is Chaperone protein HtpG from Xanthomonas axonopodis pv. citri (strain 306).